The following is a 258-amino-acid chain: Gamma-secretase subunit Aph-1b (258 aa).

7 consecutive transmembrane segments (helical) span residues 3-23, 32-52, 70-90, 118-138, 161-181, 187-207, and 214-234; these read VAVF…LFMF, VIFL…SSLV, GLLI…RYGY, AYVS…VNIL, AFMT…FFEA, WWAL…TFVN, and LIPT…CAGG.

It belongs to the APH-1 family. As to quaternary structure, component of the gamma-secretase complex, a complex composed of a presenilin homodimer (PSEN1 or PSEN2), nicastrin (NCSTN), APH1 and PEN2.

The protein resides in the membrane. In terms of biological role, essential subunit of the gamma-secretase complex, an endoprotease complex that catalyzes the intramembrane cleavage of integral proteins such as Notch receptors. It may represent a stabilizing cofactor for the presenilin homodimer that promotes the formation of a stable complex. This Danio rerio (Zebrafish) protein is Gamma-secretase subunit Aph-1b (aph1b).